The chain runs to 212 residues: Urease accessory protein UreG (212 aa).

19 to 26 (GPVGSGKT) provides a ligand contact to GTP.

Belongs to the SIMIBI class G3E GTPase family. UreG subfamily. In terms of assembly, homodimer. UreD, UreF and UreG form a complex that acts as a GTP-hydrolysis-dependent molecular chaperone, activating the urease apoprotein by helping to assemble the nickel containing metallocenter of UreC. The UreE protein probably delivers the nickel.

The protein localises to the cytoplasm. Facilitates the functional incorporation of the urease nickel metallocenter. This process requires GTP hydrolysis, probably effectuated by UreG. The sequence is that of Urease accessory protein UreG from Vibrio parahaemolyticus.